A 334-amino-acid polypeptide reads, in one-letter code: Aromatic O-demethylase, reductase subunit (334 aa).

The 2Fe-2S ferredoxin-type domain maps to 1 to 91 (MTFAVSVGGR…DTEVRSTADA (91 aa)). [2Fe-2S] cluster contacts are provided by cysteine 35, cysteine 40, cysteine 43, and cysteine 75. The FAD-binding FR-type domain occupies 98-198 (LRDLTATVLE…TGPLGDFHLP (101 aa)). Residues 145–148 (RQYS), 162–164 (HVR), 170–172 (VAT), threonine 215, phenylalanine 330, and serine 334 contribute to the FAD site.

Monomer. Forms a heterodimer with GcoA. FAD serves as cofactor. [2Fe-2S] cluster is required as a cofactor.

It catalyses the reaction 2 oxidized [cytochrome P450] + NADH = 2 reduced [cytochrome P450] + NAD(+) + H(+). The protein operates within aromatic compound metabolism. In terms of biological role, part of a two-component P450 system that efficiently O-demethylates diverse aromatic substrates such as guaiacol and a wide variety of lignin-derived monomers. Is likely involved in lignin degradation, allowing Amycolatopsis sp. ATCC 39116 to catabolize plant biomass. GcoB transfers electrons from NADH to the cytochrome P450 subunit GcoA. Highly prefers NADH over NADPH as the electron donor. In Amycolatopsis sp. (strain ATCC 39116 / 75iv2), this protein is Aromatic O-demethylase, reductase subunit.